Here is a 152-residue protein sequence, read N- to C-terminus: Large ribosomal subunit protein uL30 (152 aa).

This sequence belongs to the universal ribosomal protein uL30 family. Part of the 50S ribosomal subunit.

This is Large ribosomal subunit protein uL30 from Methanobrevibacter smithii (strain ATCC 35061 / DSM 861 / OCM 144 / PS).